A 385-amino-acid polypeptide reads, in one-letter code: D-alanyl-D-alanine-carboxypeptidase/endopeptidase AmpH (385 aa).

Residues 1-21 form the signal peptide; that stretch reads MKRSLLFSAVLCAASLTSVHA.

The protein belongs to the beta-lactamase family.

It is found in the cell inner membrane. With respect to regulation, inhibited by cefmetazole. Hydrolyzes the cross-linked dimers tetrapentapeptide (D45) and tetratetrapeptide (D44). Removes the terminal D-alanine from muropeptides and disaccharide pentapeptide M5 with a C-terminal D-Ala-D-Ala dipeptide. Associated with recycling and remodeling of peptidoglycan (PG). This is D-alanyl-D-alanine-carboxypeptidase/endopeptidase AmpH (ampH) from Escherichia coli O157:H7.